A 434-amino-acid chain; its full sequence is Alpha-enolase (434 aa).

Residue Ser-40 participates in Mg(2+) binding. 2 residues coordinate substrate: His-158 and Glu-167. Glu-210 acts as the Proton donor in catalysis. 3 residues coordinate Mg(2+): Asp-245, Glu-293, and Asp-318. Substrate contacts are provided by Glu-293 and Asp-318. Lys-343 serves as the catalytic Proton acceptor. Substrate-binding positions include 370-373 and Lys-394; that span reads SHRS.

Belongs to the enolase family. Homodimer. Requires Mg(2+) as cofactor.

The protein localises to the cytoplasm. It carries out the reaction (2R)-2-phosphoglycerate = phosphoenolpyruvate + H2O. Its pathway is carbohydrate degradation; glycolysis; pyruvate from D-glyceraldehyde 3-phosphate: step 4/5. The sequence is that of Alpha-enolase from Sceloporus undulatus (Eastern fence lizard).